The sequence spans 613 residues: MSHPSWLPPKSTGEPLGHVPARMETTHSFGNPSISVSTQQPPKKYAPVVAPKPKYNPYKQPGGEGDLLPPPPPPLEDPGTIPPGPGHFPPPPPLDEGAFKVQQGNPGGKTLEERRSSLDAEIDSLTSILADLECSSPYKPRPPQGSASSIASPPVSTPVTGHKRMVIPQQPPLTATKKSATKPQPAPQAAPIPVTPIGTLKPQPQPVPASYTTASTSSRPTFNVQVKSAQPSPHYMAGPSSGQIYGPGPRGYNNQPVPVSGQCPPPPTCVGTDYAYIPPSGHPPESGYGYTSNQGRYYEPYYAAGPSYGGRSEGDTAYGQQVQPNTWKREAAYAPPASGNQNHPGMYPVSGPKKTYITDPVSAPCAPPLQPKGGYPGPMGPPSIPPSFRPEDELEHLTKKMLYDMENPPADDYFGRCARCGENVVGEGTGCTAMDQVFHVDCFTCIVCDVKLRGQPFYAVEKKAYCEPCYINTLEQCSVCSKPIMERILRATGKAYHPHCFTCVMCHRSLDGIPFTVDACGLIHCIEDFHKKFAPRCSVCKEPIMPAPGQEETVRIVALDRDFHVHCYRCEDCGGLLSEGDNQGCYPLDGHILCKTCNSARIRVLTAKASTDL.

Disordered regions lie at residues 1–119 (MSHP…SSLD) and 133–259 (ECSS…PVPV). Polar residues predominate over residues 26 to 40 (THSFGNPSISVSTQQ). The span at 41–55 (PPKKYAPVVAPKPKY) shows a compositional bias: low complexity. The segment covering 68–94 (LPPPPPPLEDPGTIPPGPGHFPPPPPL) has biased composition (pro residues). Lys-109 bears the N6-acetyllysine mark. Phosphoserine occurs at positions 117 and 152. A compositionally biased stretch (low complexity) spans 174-183 (TATKKSATKP). The segment covering 184-194 (QPAPQAAPIPV) has biased composition (pro residues). Residues 210 to 231 (SYTTASTSSRPTFNVQVKSAQP) show a composition bias toward polar residues. The residue at position 245 (Tyr-245) is a Phosphotyrosine. Position 250 is an omega-N-methylarginine (Arg-250). Tyr-302 bears the Phosphotyrosine mark. Lys-328 participates in a covalent cross-link: Glycyl lysine isopeptide (Lys-Gly) (interchain with G-Cter in SUMO1). 3 consecutive LIM zinc-binding domains span residues 415–474 (GRCA…INTL), 475–535 (EQCS…KFAP), and 536–604 (RCSV…RIRV).

The protein belongs to the zyxin/ajuba family. In terms of assembly, interacts with VASP, with PDZ domains of SCRIB and with ACTN1/alpha-actinin.

Its subcellular location is the nucleus. It localises to the cytoplasm. It is found in the cell junction. Its function is as follows. May play a structural role at sites of cell adhesion in maintaining cell shape and motility. In addition to these structural functions, it may also be implicated in signaling events and activation of gene transcription. May be involved in signal transduction from cell adhesion sites to the nucleus allowing successful integration of signals arising from soluble factors and cell-cell adhesion sites. Also suggested to serve as a scaffold protein upon which distinct protein complexes are assembled in the cytoplasm and in the nucleus. This Mus musculus (Mouse) protein is Lipoma-preferred partner homolog (Lpp).